The primary structure comprises 204 residues: Kunitz type trypsin inhibitor 106 (204 aa).

Positions 1 to 26 (MSMRLSIRTLIILAHVCLFITTTTIA) are cleaved as a signal peptide. Asn-62 carries N-linked (GlcNAc...) asparagine glycosylation. Cysteines 65 and 112 form a disulfide. The N-linked (GlcNAc...) asparagine glycan is linked to Asn-141. Cystine bridges form between Cys-164–Cys-176 and Cys-169–Cys-172.

It belongs to the protease inhibitor I3 (leguminous Kunitz-type inhibitor) family. Interacts with SCP1 and CP. As to expression, expressed at low levels in non-mycorrhizal roots.

The protein resides in the secreted. Its subcellular location is the extracellular space. It is found in the apoplast. Protease inhibitor that, together with SCP1, controls mycorrhiza establishment and arbuscule development during root colonization by arbuscular mycorrhizal (AM) fungi (e.g. Rhizophagus irregularis), probably by degrading SCP1 in the apoplast of the periarbuscular region. The sequence is that of Kunitz type trypsin inhibitor 106 from Medicago truncatula (Barrel medic).